A 1170-amino-acid chain; its full sequence is Protein SCAR4 (1170 aa).

Disordered regions lie at residues 180-207 (KLGKDKRLRQSKKKGSHTTIKETPEDSR), 356-376 (NDADSPASTESEVKEAGSDDK), 631-674 (AAPK…PRDL), 701-742 (SYSG…NQTG), 783-819 (NQRQESPSETGSANSRTSSDESPPTQNGSVGVQSSPL), 960-980 (EESKATEEQSPSGVNGTSDTY), and 1026-1046 (HNNPHPAKLEEEEPQVDHPLE). A compositionally biased stretch (basic residues) spans 183-195 (KDKRLRQSKKKGS). Residues 198-207 (TIKETPEDSR) show a composition bias toward basic and acidic residues. Residues 356–365 (NDADSPASTE) are compositionally biased toward polar residues. The segment covering 366-376 (SEVKEAGSDDK) has biased composition (basic and acidic residues). Composition is skewed to polar residues over residues 640 to 668 (SQDGSSMNPAQSKHISTSEISSENGTLMS), 701 to 716 (SYSGQEDPQTMSIVSD), 783 to 818 (NQRQESPSETGSANSRTSSDESPPTQNGSVGVQSSP), and 967 to 980 (EQSPSGVNGTSDTY). In terms of domain architecture, WH2 spans 1105 to 1123 (ENDSLLEIIRSKSFNLRPA).

The protein belongs to the SCAR/WAVE family. As to quaternary structure, interacts with SPK1. As to expression, expressed in expanding cotyledons, expanding leaves and expanding siliques containing developing embryos. Detected in unopened flower buds and in the expanding tip region of roots. Reduced expression in mature leaves.

It localises to the cytoplasm. The protein resides in the cytoskeleton. Involved in regulation of actin and microtubule organization. Part of a WAVE complex that activates the Arp2/3 complex. Regulates trichome branch positioning and expansion. The polypeptide is Protein SCAR4 (SCAR4) (Arabidopsis thaliana (Mouse-ear cress)).